Consider the following 186-residue polypeptide: ATP synthase subunit delta (186 aa).

It belongs to the ATPase delta chain family. In terms of assembly, F-type ATPases have 2 components, F(1) - the catalytic core - and F(0) - the membrane proton channel. F(1) has five subunits: alpha(3), beta(3), gamma(1), delta(1), epsilon(1). CF(0) has four main subunits: a(1), b(1), b'(1) and c(10-14). The alpha and beta chains form an alternating ring which encloses part of the gamma chain. F(1) is attached to F(0) by a central stalk formed by the gamma and epsilon chains, while a peripheral stalk is formed by the delta, b and b' chains.

The protein localises to the cell inner membrane. F(1)F(0) ATP synthase produces ATP from ADP in the presence of a proton or sodium gradient. F-type ATPases consist of two structural domains, F(1) containing the extramembraneous catalytic core and F(0) containing the membrane proton channel, linked together by a central stalk and a peripheral stalk. During catalysis, ATP synthesis in the catalytic domain of F(1) is coupled via a rotary mechanism of the central stalk subunits to proton translocation. In terms of biological role, this protein is part of the stalk that links CF(0) to CF(1). It either transmits conformational changes from CF(0) to CF(1) or is implicated in proton conduction. The polypeptide is ATP synthase subunit delta (Rhodospirillum rubrum (strain ATCC 11170 / ATH 1.1.1 / DSM 467 / LMG 4362 / NCIMB 8255 / S1)).